Reading from the N-terminus, the 86-residue chain is Beta-toxin CsEI (86 aa).

Positions 1 to 19 (MNSLLMITACLVLIGTVWA) are cleaved as a signal peptide. Positions 20-84 (KDGYLVEKTG…TWPLPNKTCG (65 aa)) constitute an LCN-type CS-alpha/beta domain. Cystine bridges form between cysteine 30-cysteine 83, cysteine 34-cysteine 59, cysteine 43-cysteine 64, and cysteine 47-cysteine 66. Cysteine 83 is modified (cysteine amide).

The protein belongs to the long (4 C-C) scorpion toxin superfamily. Sodium channel inhibitor family. Beta subfamily. As to expression, expressed by the venom gland.

The protein resides in the secreted. Beta toxins bind voltage-independently at site-4 of sodium channels (Nav) and shift the voltage of activation toward more negative potentials thereby affecting sodium channel activation and promoting spontaneous and repetitive firing. Affects channels from chicken and frog. The chain is Beta-toxin CsEI from Centruroides sculpturatus (Arizona bark scorpion).